A 284-amino-acid polypeptide reads, in one-letter code: Co-chaperone protein DjlA (284 aa).

Residues 1–6 (MHIFGK) lie on the Periplasmic side of the membrane. Residues 7–30 (ILGAFFGFLFGGPFGAIFGIFLGH) form a helical membrane-spanning segment. The Cytoplasmic segment spans residues 31–284 (QFDKARRLNQ…ELIRKEKGIK (254 aa)). The disordered stretch occupies residues 190–211 (QGGGFGGSQQQSHSGQQWQQPS). Residues 197-211 (SQQQSHSGQQWQQPS) are compositionally biased toward low complexity. Residues 218-284 (DAYEVLGVSE…ELIRKEKGIK (67 aa)) form the J domain.

Homodimer.

It is found in the cell inner membrane. Functionally, regulatory DnaK co-chaperone. Direct interaction between DnaK and DjlA is needed for the induction of the wcaABCDE operon, involved in the synthesis of a colanic acid polysaccharide capsule, possibly through activation of the RcsB/RcsC phosphotransfer signaling pathway. The colanic acid capsule may help the bacterium survive conditions outside the host. This chain is Co-chaperone protein DjlA, found in Vibrio cholerae serotype O1 (strain ATCC 39315 / El Tor Inaba N16961).